Consider the following 35-residue polypeptide: Kappa-theraphotoxin-Gr1b (35 aa).

3 cysteine pairs are disulfide-bonded: C2-C16, C9-C21, and C15-C28. The involved in active face stretch occupies residues 4-6 (YLF).

The protein belongs to the neurotoxin 10 (Hwtx-1) family. 09 (HaTx) subfamily. In terms of tissue distribution, expressed by the venom gland.

It is found in the secreted. In terms of biological role, inhibitor of voltage-gated potassium channels. Inhibits Kv2.1/KCNB1 channels, by shifting activation of the channel to more depolarized voltages. The toxin binding sites may be situated on the S3-S4 extracellular linker of the channel. One, two, three or four toxin molecules may bind the Kv2.1/KCNB1 channel. May need to partition into the membrane in order to bind to the channel. Antibacterial activity is not observed. The chain is Kappa-theraphotoxin-Gr1b from Grammostola rosea (Chilean rose tarantula).